We begin with the raw amino-acid sequence, 270 residues long: MSDQQQPPVYKIALGIEYDGSRYYGWQRQNEVRSVQEKLEKALSQVANEPITVFCAGRTDAGVHGTGQVVHFETTAQRKDAAWTLGVNANLPGDIAVRWVKAVPDDFHARFSATARRYRYIIYNHRLRPAVLSKGVTHFYEPLDAERMHRAAQCLLGENDFTSFRAVQCQSRTPWRNVMHINVTRHGPYVVVDIKANAFVHHMVRNIVGSLMEVGANNQPESWIAELLAAKDRTLAAATAKAEGLYLVAVDYPDRFDLPKPPMGPLFLAD.

D60 (nucleophile) is an active-site residue. The segment at 107–111 (FHARF) is RNA binding. Position 118 (Y118) interacts with substrate. The segment at 168–172 (QCQSR) is interaction with tRNA.

It belongs to the tRNA pseudouridine synthase TruA family. As to quaternary structure, homodimer.

The enzyme catalyses uridine(38/39/40) in tRNA = pseudouridine(38/39/40) in tRNA. Functionally, formation of pseudouridine at positions 38, 39 and 40 in the anticodon stem and loop of transfer RNAs. In Escherichia fergusonii (strain ATCC 35469 / DSM 13698 / CCUG 18766 / IAM 14443 / JCM 21226 / LMG 7866 / NBRC 102419 / NCTC 12128 / CDC 0568-73), this protein is tRNA pseudouridine synthase A.